The primary structure comprises 323 residues: uncharacterized protein (323 aa).

This sequence belongs to the glycosyltransferase 2 family.

This is an uncharacterized protein from Haemophilus influenzae (strain ATCC 51907 / DSM 11121 / KW20 / Rd).